A 286-amino-acid chain; its full sequence is Aminoglycoside N(3)-acetyltransferase III (286 aa).

The protein belongs to the antibiotic N-acetyltransferase family.

The enzyme catalyses a 2-deoxystreptamine antibiotic + acetyl-CoA = an N(3)-acetyl-2-deoxystreptamine antibiotic + CoA + H(+). Its function is as follows. Resistance to antibiotics containing the 2-deoxy-streptamine ring including gentamicin, kanamycin, tobramycin, neomycin and apramycin. The sequence is that of Aminoglycoside N(3)-acetyltransferase III (aacC2) from Acinetobacter baumannii.